A 267-amino-acid polypeptide reads, in one-letter code: Oxidoreductase ordB (267 aa).

The protein belongs to the avfA family.

It functions in the pathway mycotoxin biosynthesis. Functionally, oxidoreductase; part of the fragmented gene cluster that mediates the biosynthesis of dothistromin (DOTH), a polyketide toxin very similar in structure to the aflatoxin precursor, versicolorin B. The first step of the pathway is the conversion of acetate to norsolorinic acid (NOR) and requires the fatty acid synthase subunits hexA and hexB, as well as the polyketide synthase pksA. PksA combines a hexanoyl starter unit and 7 malonyl-CoA extender units to synthesize the precursor NOR. The hexanoyl starter unit is provided to the acyl-carrier protein (ACP) domain by the fungal fatty acid synthase hexA/hexB. The second step is the conversion of NOR to averantin (AVN) and requires the norsolorinic acid ketoreductase nor1, which catalyzes the dehydration of norsolorinic acid to form (1'S)-averantin. The cytochrome P450 monooxygenase avnA then catalyzes the hydroxylation of AVN to 5'hydroxyaverantin (HAVN). The next step is performed by adhA that transforms HAVN to averufin (AVF). Averufin might then be converted to hydroxyversicolorone by cypX and avfA. Hydroxyversicolorone is further converted versiconal hemiacetal acetate (VHA) by moxY. VHA is then the substrate for the versiconal hemiacetal acetate esterase est1 to yield versiconal (VAL). Versicolorin B synthase vbsA then converts VAL to versicolorin B (VERB) by closing the bisfuran ring. Then, the activity of the versicolorin B desaturase verB leads to versicolorin A (VERA). DotB, a predicted chloroperoxidase, may perform epoxidation of the A-ring of VERA. Alternatively, a cytochrome P450, such as cypX or avnA could catalyze this step. It is also possible that another, uncharacterized, cytochrome P450 enzyme is responsible for this step. Opening of the epoxide could potentially be achieved by the epoxide hydrolase epoA. However, epoA seems not to be required for DOTH biosynthesis, but other epoxide hydrolases may have the ability to complement this hydrolysis. Alternatively, opening of the epoxide ring could be achieved non-enzymatically. The next step is the deoxygenation of ring A to yield the 5,8-dihydroxyanthraquinone which is most likely catalyzed by the NADPH dehydrogenase encoded by ver1. The last stages of DOTH biosynthesis are proposed to involve hydroxylation of the bisfuran. OrdB and norB might have oxidative roles here. An alternative possibility is that cytochrome P450 monoogenases such as avnA and cypX might perform these steps in addition to previously proposed steps. This is Oxidoreductase ordB from Dothistroma septosporum (strain NZE10 / CBS 128990) (Red band needle blight fungus).